A 319-amino-acid chain; its full sequence is MKPENKLPVLDLISAEMKTVVNTLQPDLPSWPATGTIAEQRQYYTLERRFWNAGAPEMATRAYMVPTKYGQVETRLFCPQPDSPATLFYLHGGGFILGNLDTHDRIMRLLASYSQCTVIGIDYTLSPEARFPQAIEEIVAACCYFHQQAEDYQINMSRIGFAGDSAGAMLALASALWLRDKQIDCGKIAGVLLWYGLYGLRDSVTRRLLGGVWDGLTQQDLQMYEEAYLSNDADRESPYYCLFNNDLTREVPPCFIAGAEFDPLLDDSRLLYQTLAAHQQPCEFKLYPGTLHAFLHYSRMMKTADEALRDGAQFFTAQL.

An Involved in the stabilization of the negatively charged intermediate by the formation of the oxyanion hole motif is present at residues 91 to 93 (HGG). Residues Ser165, Asp262, and His292 contribute to the active site.

Belongs to the 'GDXG' lipolytic enzyme family. As to quaternary structure, homodimer. Interacts with MalT and MelA.

It is found in the cytoplasm. In terms of biological role, displays esterase activity towards short chain fatty esters (acyl chain length of up to 8 carbons). Able to hydrolyze triacetylglycerol (triacetin) and tributyrylglycerol (tributyrin), but not trioleylglycerol (triolein) or cholesterol oleate. Negatively regulates MalT activity by antagonizing maltotriose binding. Inhibits MelA galactosidase activity. The protein is Acetyl esterase of Escherichia coli O8 (strain IAI1).